The following is a 450-amino-acid chain: MGKYFGTDGVRGEANVGLTPELAFKLGRFGGYVLSQHETGRPKVFVARDTRISGEMLESALVAGLLSVGIEVYKLGVLATPGVSYLVRTENASAGVMISASHNPALDNGIKFFGGDGFKLDDAREAEIEALLDAAEDTLPRPSAEGLGTLVDYPEGLRKYEKFLVTTGLDLGGMKVALDAANGAAAVSARNIFLDLNAEIAVIGDQPDGLNINAGVGSTHPEQLQALVRESGSAIGLAFDGDSDRLIAVDENGDIVDGDKVMYIIGKYLSQKGELAKNTIVTTVMSNLGFHKALDREGINKAVTAVGDRYVVEEMRKNGYNLGGEQSGHVIIMDYNTTGDGQLTAIQLTKVMVETGKSLSELAAEVTIYPQKLVNIRVENSMKDKAMDVPAIAAIIEKMEAEMAGNGRILVRPSGTEPLLRVMAEAPTDDEVNYYVDTIADVVRAEIGLD.

The active-site Phosphoserine intermediate is the S101. Mg(2+)-binding residues include S101, D240, D242, and D244. A Phosphoserine modification is found at S101.

This sequence belongs to the phosphohexose mutase family. Mg(2+) serves as cofactor. In terms of processing, activated by phosphorylation.

The catalysed reaction is alpha-D-glucosamine 1-phosphate = D-glucosamine 6-phosphate. Catalyzes the conversion of glucosamine-6-phosphate to glucosamine-1-phosphate. This Streptococcus thermophilus (strain CNRZ 1066) protein is Phosphoglucosamine mutase.